The following is a 368-amino-acid chain: GTPase Obg (368 aa).

Residues 1–159 form the Obg domain; the sequence is MQFIDQAEIE…RQLRLELKLL (159 aa). In terms of domain architecture, OBG-type G spans 160–328; it reads AEVGIIGLPN…LMQLVWQWLD (169 aa). Residues 166–173, 191–195, 213–216, 280–283, and 309–311 contribute to the GTP site; these read GLPNAGKS, FTTLV, DIPG, NKID, and SAA. Serine 173 and threonine 193 together coordinate Mg(2+).

It belongs to the TRAFAC class OBG-HflX-like GTPase superfamily. OBG GTPase family. Monomer. Requires Mg(2+) as cofactor.

The protein resides in the cytoplasm. Its function is as follows. An essential GTPase which binds GTP, GDP and possibly (p)ppGpp with moderate affinity, with high nucleotide exchange rates and a fairly low GTP hydrolysis rate. Plays a role in control of the cell cycle, stress response, ribosome biogenesis and in those bacteria that undergo differentiation, in morphogenesis control. The protein is GTPase Obg of Synechocystis sp. (strain ATCC 27184 / PCC 6803 / Kazusa).